The chain runs to 294 residues: 4-hydroxy-tetrahydrodipicolinate synthase (294 aa).

Thr-47 contacts pyruvate. Residue Tyr-136 is the Proton donor/acceptor of the active site. Lys-164 acts as the Schiff-base intermediate with substrate in catalysis. Position 206 (Val-206) interacts with pyruvate.

This sequence belongs to the DapA family. In terms of assembly, homotetramer; dimer of dimers.

It is found in the cytoplasm. It carries out the reaction L-aspartate 4-semialdehyde + pyruvate = (2S,4S)-4-hydroxy-2,3,4,5-tetrahydrodipicolinate + H2O + H(+). Its pathway is amino-acid biosynthesis; L-lysine biosynthesis via DAP pathway; (S)-tetrahydrodipicolinate from L-aspartate: step 3/4. Catalyzes the condensation of (S)-aspartate-beta-semialdehyde [(S)-ASA] and pyruvate to 4-hydroxy-tetrahydrodipicolinate (HTPA). This chain is 4-hydroxy-tetrahydrodipicolinate synthase, found in Cyanothece sp. (strain PCC 7425 / ATCC 29141).